The chain runs to 146 residues: Ribonuclease H (146 aa).

Residues 1–143 (MKEIIIYTDG…CDQLARNAIK (143 aa)) enclose the RNase H type-1 domain. 4 residues coordinate Mg(2+): D9, E47, D70, and D135.

Belongs to the RNase H family. Monomer. It depends on Mg(2+) as a cofactor.

The protein localises to the cytoplasm. The catalysed reaction is Endonucleolytic cleavage to 5'-phosphomonoester.. Endonuclease that specifically degrades the RNA of RNA-DNA hybrids. The chain is Ribonuclease H from Syntrophomonas wolfei subsp. wolfei (strain DSM 2245B / Goettingen).